A 77-amino-acid polypeptide reads, in one-letter code: Putative snRNP Sm-like protein (77 aa).

A Sm domain is found at 4–76 (RPLDVLNRSL…VVFVSPAPGG (73 aa)).

It belongs to the snRNP Sm proteins family.

The polypeptide is Putative snRNP Sm-like protein (Archaeoglobus fulgidus (strain ATCC 49558 / DSM 4304 / JCM 9628 / NBRC 100126 / VC-16)).